Reading from the N-terminus, the 361-residue chain is G2/mitotic-specific cyclin-B (361 aa).

The protein belongs to the cyclin family. Cyclin AB subfamily.

Functionally, essential for the control of the cell cycle at the G2/M (mitosis) transition. Interacts with the CDC2 protein kinase to form MPF. G2/M cyclins accumulate steadily during G2 and are abruptly destroyed at mitosis. The chain is G2/mitotic-specific cyclin-B from Hydra vulgaris (Hydra).